The primary structure comprises 192 residues: 7-methyl-GTP pyrophosphatase (192 aa).

The Proton acceptor role is filled by Asp-69.

It belongs to the Maf family. YceF subfamily. Requires a divalent metal cation as cofactor.

The protein resides in the cytoplasm. It catalyses the reaction N(7)-methyl-GTP + H2O = N(7)-methyl-GMP + diphosphate + H(+). Functionally, nucleoside triphosphate pyrophosphatase that hydrolyzes 7-methyl-GTP (m(7)GTP). May have a dual role in cell division arrest and in preventing the incorporation of modified nucleotides into cellular nucleic acids. This Pseudomonas savastanoi pv. phaseolicola (strain 1448A / Race 6) (Pseudomonas syringae pv. phaseolicola (strain 1448A / Race 6)) protein is 7-methyl-GTP pyrophosphatase.